We begin with the raw amino-acid sequence, 99 residues long: Probable small ribosomal subunit protein cS23 (99 aa).

The protein belongs to the chloroplast-specific ribosomal protein cS23 family. Part of the 30S ribosomal subunit.

Probably a ribosomal protein or a ribosome-associated protein. The polypeptide is Probable small ribosomal subunit protein cS23 (Synechococcus sp. (strain JA-2-3B'a(2-13)) (Cyanobacteria bacterium Yellowstone B-Prime)).